A 364-amino-acid chain; its full sequence is Alanine racemase (364 aa).

Lysine 34 acts as the Proton acceptor; specific for D-alanine in catalysis. Lysine 34 bears the N6-(pyridoxal phosphate)lysine mark. Arginine 129 lines the substrate pocket. Residue tyrosine 259 is the Proton acceptor; specific for L-alanine of the active site. Position 307 (methionine 307) interacts with substrate.

Belongs to the alanine racemase family. The cofactor is pyridoxal 5'-phosphate.

The catalysed reaction is L-alanine = D-alanine. It participates in amino-acid biosynthesis; D-alanine biosynthesis; D-alanine from L-alanine: step 1/1. Functionally, catalyzes the interconversion of L-alanine and D-alanine. May also act on other amino acids. This chain is Alanine racemase (alr), found in Coxiella burnetii (strain RSA 493 / Nine Mile phase I).